Consider the following 187-residue polypeptide: Putative glutathione-dependent formaldehyde-activating enzyme (187 aa).

Residues 20 to 166 (FQGGVLKCKC…FESLGLESYD (147 aa)) form the CENP-V/GFA domain. Cys27, Cys29, Cys48, Cys50, Cys53, Cys95, and Cys98 together coordinate Zn(2+).

The protein belongs to the Gfa family. Zn(2+) is required as a cofactor.

It carries out the reaction S-(hydroxymethyl)glutathione = glutathione + formaldehyde. It participates in one-carbon metabolism; formaldehyde degradation; formate from formaldehyde (glutathione route): step 1/3. Catalyzes the condensation of formaldehyde and glutathione to S-hydroxymethylglutathione. This Verticillium alfalfae (strain VaMs.102 / ATCC MYA-4576 / FGSC 10136) (Verticillium wilt of alfalfa) protein is Putative glutathione-dependent formaldehyde-activating enzyme.